The chain runs to 506 residues: Methylthioalkylmalate synthase 1, chloroplastic (506 aa).

Residues 1–49 constitute a chloroplast transit peptide; the sequence is MASSLLTSSVMIPTTGSTVVGRSVLPFQSSLHSLRLTHSYKNPALFISC. The Pyruvate carboxyltransferase domain occupies 85-359; sequence VRVFDTTLRD…YTKIDTRQIM (275 aa). The residue at position 98 (S98) is a Phosphoserine.

This sequence belongs to the alpha-IPM synthase/homocitrate synthase family. In terms of assembly, monomer. Mn(2+) serves as cofactor. As to expression, highly expressed in leaves, flowers, roots and siliques. Not detected in flowers in PubMed:12432038.

It localises to the plastid. The protein localises to the chloroplast. The catalysed reaction is an omega-(methylsulfanyl)-2-oxoalkanoate + acetyl-CoA + H2O = a 2-(omega-methylsulfanyl)alkylmalate + CoA + H(+). With respect to regulation, 1 mM DTT required for activity. Activated by ATP and inhibited by iodoacetamide. Functionally, determines the side chain length of aliphatic glucosinolate structures. Catalyzes exclusively the condensation reactions of both the first and second methionine carbon chain elongation. In Arabidopsis thaliana (Mouse-ear cress), this protein is Methylthioalkylmalate synthase 1, chloroplastic (MAM1).